The primary structure comprises 89 residues: Small ribosomal subunit protein uS15 (89 aa).

This sequence belongs to the universal ribosomal protein uS15 family. In terms of assembly, part of the 30S ribosomal subunit. Forms a bridge to the 50S subunit in the 70S ribosome, contacting the 23S rRNA.

Functionally, one of the primary rRNA binding proteins, it binds directly to 16S rRNA where it helps nucleate assembly of the platform of the 30S subunit by binding and bridging several RNA helices of the 16S rRNA. Its function is as follows. Forms an intersubunit bridge (bridge B4) with the 23S rRNA of the 50S subunit in the ribosome. The polypeptide is Small ribosomal subunit protein uS15 (Staphylococcus aureus (strain JH1)).